Consider the following 119-residue polypeptide: Microtubule nucleation factor SSNA1 (119 aa).

Thr-2 is modified (N-acetylthreonine). Positions Thr-2 to Gln-32 are important for localization to the centrosome. The stretch at Asn-13–Glu-70 forms a coiled coil.

This sequence belongs to the SSNA1 family. Self-associates to form fibrils. Also forms dimers as well as monomers. Interacts with SPAST. Widely expressed.

The protein resides in the nucleus. Its subcellular location is the cytoplasm. It localises to the cytoskeleton. It is found in the microtubule organizing center. The protein localises to the centrosome. The protein resides in the centriole. Its subcellular location is the midbody. It localises to the flagellum basal body. It is found in the flagellum axoneme. The protein localises to the cell projection. The protein resides in the axon. Functionally, microtubule-binding protein which stabilizes dynamic microtubules by slowing growth and shrinkage at both plus and minus ends and serves as a sensor of microtubule damage, protecting microtubules from the microtubule-severing enzyme SPAST. Induces microtubule branching which is mediated by the formation of long SSNA1 fibrils which guide microtubule protofilaments to split apart from the mother microtubule and form daughter microtubules. Plays a role in axon outgrowth and branching. Required for cell division. This Homo sapiens (Human) protein is Microtubule nucleation factor SSNA1.